Reading from the N-terminus, the 475-residue chain is MAFDDLRSFLQALDDHGQLLKISEEVNAEPDLAAAANATGRIGDGAPALWFDNIRGFTDARVAMNTIGSWQNHAISLGLPPNTPVKKQIDEFIRRWDNFPIAPERRANPAWAQNTVDGDEINLFDILPLFRLNDGDGGFYLDKACVVSRDPLDPDNFGKQNVGIYRMEVKGKRKLGLQPVPMHDIALHLHKAEERGEDLPIAITLGNDPIITLMGATPLKYDQSEYEMAGALRESPYPIATAPLTGFDVPWGSEVILEGVIESRKREIEGPFGEFTGHYSGGRNMTVVRIDKVSYRTRPIFESLYLGMPWTEIDYLMGPATCVPLYQQLKAEFPEVQAVNAMYTHGLLAIISTKKRYGGFARAVGLRAMTTPHGLGYVKMVIMVDEDVDPFNLPQVMWALSSKVNPAGDLVQLPNMSVLELDPGSSPAGITDKLIIDATTPVAPDNRGHYSQPVVDLPETKAWAEKLTAMLAARK.

Residues asparagine 161, histidine 183, and glutamate 225 each contribute to the Mn(2+) site. Prenylated FMN-binding positions include 161 to 166 and 182 to 183; these read NVGIYR and MH. The active-site Proton donor is the glutamate 274.

The protein belongs to the UbiD family. YclC subfamily. Prenylated FMN serves as cofactor. Requires Mn(2+) as cofactor.

The enzyme catalyses 4-hydroxybenzoate + H(+) = phenol + CO2. It carries out the reaction vanillate + H(+) = guaiacol + CO2. In terms of biological role, involved in the non-oxidative decarboxylation and detoxification of phenolic derivatives under both aerobic and anaerobic conditions. Phenolic acid decarboxylase that catalyzes the reversible decarboxylation of 4-hydroxybenzoate and vanillate. The polypeptide is Phenolic acid decarboxylase (Escherichia coli O157:H7).